A 216-amino-acid polypeptide reads, in one-letter code: Pyrophosphatase PpaX (216 aa).

D12 acts as the Nucleophile in catalysis.

This sequence belongs to the HAD-like hydrolase superfamily. PpaX family. Requires Mg(2+) as cofactor.

It carries out the reaction diphosphate + H2O = 2 phosphate + H(+). Its function is as follows. Hydrolyzes pyrophosphate formed during P-Ser-HPr dephosphorylation by HPrK/P. Might play a role in controlling the intracellular pyrophosphate pool. The polypeptide is Pyrophosphatase PpaX (Bacillus pumilus (strain SAFR-032)).